The primary structure comprises 467 residues: Actinorhodin polyketide putative beta-ketoacyl synthase 1 (467 aa).

The interval 1-35 is disordered; the sequence is MPLDAAPVDPASRGPVSAFEPPSSHGADDDDDHRT. One can recognise a Ketosynthase family 3 (KS3) domain in the interval 45–459; the sequence is KRRVVITGVG…GFQSAMVLRD (415 aa). Active-site for beta-ketoacyl synthase activity residues include Cys-212, His-352, and His-389.

Belongs to the thiolase-like superfamily. Beta-ketoacyl-ACP synthases family.

It functions in the pathway antibiotic biosynthesis; actinorhodin biosynthesis. The chain is Actinorhodin polyketide putative beta-ketoacyl synthase 1 from Streptomyces coelicolor (strain ATCC BAA-471 / A3(2) / M145).